We begin with the raw amino-acid sequence, 287 residues long: Hydroxysteroid 11-beta-dehydrogenase 1-like protein (287 aa).

Residues 1–15 form the signal peptide; the sequence is MKVLLLTGLGALFFA. NADP(+) contacts are provided by residues 36 to 62, 87 to 88, and 114 to 116; these read GVSA…TAHT, DM, and NHL. Ser-165 contributes to the substrate binding site. Tyr-178 functions as the Proton acceptor in the catalytic mechanism. NADP(+) contacts are provided by residues 178 to 182 and 211 to 217; these read YSAAK and GLRDRAS. Asn-280 carries an N-linked (GlcNAc...) asparagine glycan.

The protein belongs to the short-chain dehydrogenases/reductases (SDR) family.

Its subcellular location is the secreted. The enzyme catalyses cortisone + NADPH + H(+) = cortisol + NADP(+). Its function is as follows. Unidirectional NADP(+)-dependent cortisol dehydrogenase (in vitro). The sequence is that of Hydroxysteroid 11-beta-dehydrogenase 1-like protein (HSD11B1L) from Bos taurus (Bovine).